Reading from the N-terminus, the 753-residue chain is Synaptotagmin-like protein 5 (753 aa).

The region spanning 7–123 (FINLSFLLDH…IISGEWFLEE (117 aa)) is the RabBD domain. Residues 64-106 (CVHCHKTLGLIFDRGDPCQACSLRVCSECRVTGLDGSWKCTVC) form an FYVE-type zinc finger. Disordered stretches follow at residues 145–279 (RRSP…SREH), 297–359 (LTKS…LNSL), and 380–404 (LASG…VPDA). Phosphoserine is present on Ser147. The span at 150 to 174 (SEETQNQEQAQQCVDKSDTLSSVRQ) shows a compositional bias: polar residues. Residues 195-206 (TRGEIRTPKPES) show a composition bias toward basic and acidic residues. The segment covering 214–223 (LDSQNLQSFK) has biased composition (polar residues). Over residues 224-237 (SASGSDRGSTTSSD) the composition is skewed to low complexity. Residues 249-275 (KSSYSNGGIPVTQRSPVPSAHSVTSIN) show a composition bias toward polar residues. Positions 380-391 (LASGLSTNSQAG) are enriched in polar residues. 2 consecutive C2 domains span residues 429–550 (VTGE…DEWF) and 597–717 (KRGK…VDWM).

As to quaternary structure, binds RAB27A that has been activated by GTP-binding.

Its subcellular location is the membrane. In terms of biological role, may act as Rab effector protein and play a role in vesicle trafficking. Binds phospholipids. The sequence is that of Synaptotagmin-like protein 5 (Sytl5) from Mus musculus (Mouse).